The primary structure comprises 366 residues: Quinolinate synthase (366 aa).

His-44 and Ser-61 together coordinate iminosuccinate. Residue Cys-108 participates in [4Fe-4S] cluster binding. Residues 139–141 (YVN) and Ser-160 contribute to the iminosuccinate site. Cys-228 contacts [4Fe-4S] cluster. Iminosuccinate-binding positions include 254–256 (HPE) and Thr-271. Residue Cys-318 coordinates [4Fe-4S] cluster.

This sequence belongs to the quinolinate synthase family. Type 3 subfamily. [4Fe-4S] cluster serves as cofactor.

The protein localises to the cytoplasm. The enzyme catalyses iminosuccinate + dihydroxyacetone phosphate = quinolinate + phosphate + 2 H2O + H(+). The protein operates within cofactor biosynthesis; NAD(+) biosynthesis; quinolinate from iminoaspartate: step 1/1. Its function is as follows. Catalyzes the condensation of iminoaspartate with dihydroxyacetone phosphate to form quinolinate. This chain is Quinolinate synthase, found in Staphylococcus carnosus (strain TM300).